Reading from the N-terminus, the 355-residue chain is N6-Methyl-AMP deaminase (355 aa).

2 residues coordinate Zn(2+): histidine 24 and histidine 26. Residues histidine 26, asparagine 28, histidine 74, 106 to 109 (STPR), aspartate 148, and glycine 181 each bind N(6)-methyl-AMP. A Zn(2+)-binding site is contributed by histidine 208. The N(6)-methyl-AMP site is built by glutamate 211, aspartate 293, and aspartate 294. Residue glutamate 211 is the Proton donor of the active site. Residue aspartate 293 participates in Zn(2+) binding.

This sequence belongs to the metallo-dependent hydrolases superfamily. Adenosine and AMP deaminases family. Monomer. Zn(2+) serves as cofactor.

The catalysed reaction is N(6)-methyl-AMP + H2O + H(+) = IMP + methylamine. In terms of biological role, catalyzes the hydrolysis of the free cytosolic methylated adenosine nucleotide N(6)-methyl-AMP (N6-mAMP) to produce inositol monophosphate (IMP) and methylamine. Is required for the catabolism of cytosolic N6-mAMP, which is derived from the degradation of mRNA containing N6-methylated adenine (m6A). Catalyzes the removal of different alkyl groups not only from N6-substituted purine or 2-aminopurine nucleoside monophosphates but also from O6-substituted compounds in vitro. The protein is N6-Methyl-AMP deaminase of Homo sapiens (Human).